The primary structure comprises 326 residues: Porin-like protein H (326 aa).

A signal peptide spans Met-1 to Ala-19.

This sequence belongs to the Gram-negative porin family. As to quaternary structure, oligomer.

The protein localises to the cell outer membrane. Functionally, forms pores that allow passive diffusion of small molecules across the outer membrane. This is Porin-like protein H (ompH) from Photobacterium profundum (strain SS9).